Consider the following 321-residue polypeptide: Mas-related G-protein coupled receptor member D (321 aa).

Over 1-33 (MNQTLNSSGTVESALNYSRGSTVHTAYLVLSSL) the chain is Extracellular. N-linked (GlcNAc...) asparagine glycosylation is found at asparagine 2, asparagine 6, and asparagine 16. A helical transmembrane segment spans residues 34-54 (AMFTCLCGMAGNSMVIWLLGF). Residues 55 to 59 (RMHRN) lie on the Cytoplasmic side of the membrane. Residues 60 to 80 (PFCIYILNLAAADLLFLFSMA) form a helical membrane-spanning segment. Residues 81–112 (STLSLETQPLVNTTDKVHELMKRLMYFAYTVG) are Extracellular-facing. A glycan (N-linked (GlcNAc...) asparagine) is linked at asparagine 92. Residues 113–133 (LSLLTAISTQRCLSVLFPIWF) traverse the membrane as a helical segment. Topologically, residues 134 to 142 (KCHRPRHLS) are cytoplasmic. The chain crosses the membrane as a helical span at residues 143–163 (AWVCGLLWTLCLLMNGLTSSF). Over 164 to 184 (CSKFLKFNEDRCFRVDMVQAA) the chain is Extracellular. Residues 185–205 (LIMGVLTPVMTLSSLTLFVWV) form a helical membrane-spanning segment. At 206–218 (RRSSQQWRRQPTR) the chain is on the cytoplasmic side. Residues 219-239 (LFVVVLASVLVFLICSLPLSI) traverse the membrane as a helical segment. Over 240-257 (YWFVLYWLSLPPEMQVLC) the chain is Extracellular. A helical transmembrane segment spans residues 258-280 (FSLSRLSSSVSSSANPVIYFLVG). The Cytoplasmic segment spans residues 281-321 (SRRSHRLPTRSLGTVLQQALREEPELEGGETPTVGTNEMGA). The disordered stretch occupies residues 302–321 (EEPELEGGETPTVGTNEMGA).

The protein belongs to the G-protein coupled receptor 1 family. Mas subfamily.

The protein localises to the cell membrane. In terms of biological role, may regulate nociceptor function and/or development, including the sensation or modulation of pain. Functions as a specific membrane receptor for beta-alanine. Beta-alanine at micromolar doses specifically evoked Ca(2+) influx in cells expressing the receptor. Beta-alanine decreases forskolin-stimulated cAMP production in cells expressing the receptor, suggesting that the receptor couples with G-protein G(q) and G(i). In Homo sapiens (Human), this protein is Mas-related G-protein coupled receptor member D (MRGPRD).